Consider the following 309-residue polypeptide: HPr kinase/phosphorylase (309 aa).

Active-site residues include His139 and Lys160. 154–161 contacts ATP; it reads GESGIGKS. Ser161 serves as a coordination point for Mg(2+). Catalysis depends on Asp178, which acts as the Proton acceptor; for phosphorylation activity. Proton donor; for dephosphorylation activity. Residues 202–211 are important for the catalytic mechanism of both phosphorylation and dephosphorylation; the sequence is IELRGIGIID. Glu203 contributes to the Mg(2+) binding site. Arg244 is a catalytic residue. The segment at 265-270 is important for the catalytic mechanism of dephosphorylation; sequence PIRPGR.

This sequence belongs to the HPrK/P family. Homohexamer. Mg(2+) is required as a cofactor.

The catalysed reaction is [HPr protein]-L-serine + ATP = [HPr protein]-O-phospho-L-serine + ADP + H(+). It carries out the reaction [HPr protein]-O-phospho-L-serine + phosphate + H(+) = [HPr protein]-L-serine + diphosphate. Catalyzes the ATP- as well as the pyrophosphate-dependent phosphorylation of a specific serine residue in HPr, a phosphocarrier protein of the phosphoenolpyruvate-dependent sugar phosphotransferase system (PTS). HprK/P also catalyzes the pyrophosphate-producing, inorganic phosphate-dependent dephosphorylation (phosphorolysis) of seryl-phosphorylated HPr (P-Ser-HPr). The two antagonistic activities of HprK/P are regulated by several intracellular metabolites, which change their concentration in response to the absence or presence of rapidly metabolisable carbon sources (glucose, fructose, etc.) in the growth medium. Therefore, by controlling the phosphorylation state of HPr, HPrK/P is a sensor enzyme that plays a major role in the regulation of carbon metabolism and sugar transport: it mediates carbon catabolite repression (CCR), and regulates PTS-catalyzed carbohydrate uptake and inducer exclusion. The polypeptide is HPr kinase/phosphorylase (Lachnoclostridium phytofermentans (strain ATCC 700394 / DSM 18823 / ISDg) (Clostridium phytofermentans)).